The chain runs to 179 residues: Large ribosomal subunit protein uL6 (179 aa).

This sequence belongs to the universal ribosomal protein uL6 family. In terms of assembly, part of the 50S ribosomal subunit.

This protein binds to the 23S rRNA, and is important in its secondary structure. It is located near the subunit interface in the base of the L7/L12 stalk, and near the tRNA binding site of the peptidyltransferase center. This Kineococcus radiotolerans (strain ATCC BAA-149 / DSM 14245 / SRS30216) protein is Large ribosomal subunit protein uL6.